We begin with the raw amino-acid sequence, 317 residues long: Porphobilinogen deaminase (317 aa).

S-(dipyrrolylmethanemethyl)cysteine is present on C245.

This sequence belongs to the HMBS family. Monomer. Requires dipyrromethane as cofactor.

The enzyme catalyses 4 porphobilinogen + H2O = hydroxymethylbilane + 4 NH4(+). Its pathway is porphyrin-containing compound metabolism; protoporphyrin-IX biosynthesis; coproporphyrinogen-III from 5-aminolevulinate: step 2/4. The protein operates within porphyrin-containing compound metabolism; chlorophyll biosynthesis. Functionally, tetrapolymerization of the monopyrrole PBG into the hydroxymethylbilane pre-uroporphyrinogen in several discrete steps. This chain is Porphobilinogen deaminase, found in Prochlorococcus marinus (strain MIT 9303).